Here is a 321-residue protein sequence, read N- to C-terminus: Large ribosomal subunit protein uL10 (321 aa).

Positions 284 to 321 (SAGTAPTGGGAAAAAVEEKKEEPEEESDDDIGFSLFDD) are disordered. Acidic residues predominate over residues 306–321 (PEEESDDDIGFSLFDD).

Belongs to the universal ribosomal protein uL10 family. P0 forms a pentameric complex by interaction with dimers of P1 and P2. Phosphorylated.

Ribosomal protein P0 is the functional equivalent of E.coli protein L10. This Oxybasis rubra (Red goosefoot) protein is Large ribosomal subunit protein uL10.